We begin with the raw amino-acid sequence, 202 residues long: Transmembrane 4 L6 family member 4 (202 aa).

Residues 1 to 9 (MCTGGCARC) lie on the Cytoplasmic side of the membrane. The helical transmembrane segment at 10 to 30 (LGGTLIPLAVFAVLANILLFF) threads the bilayer. Over 31–48 (PGGKVVDDNSHLSDEVWY) the chain is Extracellular. Residues 49-69 (FGGILGSGVLMIFPALVFLGL) traverse the membrane as a helical segment. Topologically, residues 70 to 93 (QNNDCCGCCGNESCGKRFAMFTST) are cytoplasmic. Residues 94 to 114 (LFAVVGFLGAAYSFIVSAVSI) traverse the membrane as a helical segment. Residues 115-158 (NKGPKCFMTNNTWGYPFHDGDYLNDQALWSKCEEPRDVVPWNLT) lie on the Extracellular side of the membrane. Asn156 carries an N-linked (GlcNAc...) asparagine glycan. Residues 159–179 (LFSILLVIGGIQMVLCAIQVI) traverse the membrane as a helical segment. At 180–202 (NGLLGTLCGDCQCCGCCGGDRPV) the chain is on the cytoplasmic side.

Belongs to the L6 tetraspanin family. As to expression, expressed in liver and testis. Up-regulated in regenerating liver after partial hepatectomy.

The protein localises to the membrane. Functionally, regulates the adhesive and proliferative status of intestinal epithelial cells. Can mediate density-dependent cell proliferation. The chain is Transmembrane 4 L6 family member 4 (Tm4sf4) from Rattus norvegicus (Rat).